Here is a 201-residue protein sequence, read N- to C-terminus: Large ribosomal subunit protein uL18 (201 aa).

It belongs to the universal ribosomal protein uL18 family. Part of the 50S ribosomal subunit. Contacts the 5S and 23S rRNAs.

This is one of the proteins that bind and probably mediate the attachment of the 5S RNA into the large ribosomal subunit, where it forms part of the central protuberance. This is Large ribosomal subunit protein uL18 from Thermococcus gammatolerans (strain DSM 15229 / JCM 11827 / EJ3).